A 238-amino-acid polypeptide reads, in one-letter code: DNA repair protein RecO (238 aa).

It belongs to the RecO family.

In terms of biological role, involved in DNA repair and RecF pathway recombination. The chain is DNA repair protein RecO from Cereibacter sphaeroides (strain ATCC 17023 / DSM 158 / JCM 6121 / CCUG 31486 / LMG 2827 / NBRC 12203 / NCIMB 8253 / ATH 2.4.1.) (Rhodobacter sphaeroides).